Consider the following 377-residue polypeptide: Queuine tRNA-ribosyltransferase (377 aa).

Asp-93 (proton acceptor) is an active-site residue. Substrate is bound by residues 93-97 (DSGGF), Asp-147, Gln-190, and Gly-216. Positions 247-253 (GVGTPDD) are RNA binding. The active-site Nucleophile is the Asp-266. The interval 271–275 (TRAGR) is RNA binding; important for wobble base 34 recognition. 4 residues coordinate Zn(2+): Cys-304, Cys-306, Cys-309, and His-335.

Belongs to the queuine tRNA-ribosyltransferase family. In terms of assembly, homodimer. Within each dimer, one monomer is responsible for RNA recognition and catalysis, while the other monomer binds to the replacement base PreQ1. Requires Zn(2+) as cofactor.

The catalysed reaction is 7-aminomethyl-7-carbaguanine + guanosine(34) in tRNA = 7-aminomethyl-7-carbaguanosine(34) in tRNA + guanine. It participates in tRNA modification; tRNA-queuosine biosynthesis. In terms of biological role, catalyzes the base-exchange of a guanine (G) residue with the queuine precursor 7-aminomethyl-7-deazaguanine (PreQ1) at position 34 (anticodon wobble position) in tRNAs with GU(N) anticodons (tRNA-Asp, -Asn, -His and -Tyr). Catalysis occurs through a double-displacement mechanism. The nucleophile active site attacks the C1' of nucleotide 34 to detach the guanine base from the RNA, forming a covalent enzyme-RNA intermediate. The proton acceptor active site deprotonates the incoming PreQ1, allowing a nucleophilic attack on the C1' of the ribose to form the product. After dissociation, two additional enzymatic reactions on the tRNA convert PreQ1 to queuine (Q), resulting in the hypermodified nucleoside queuosine (7-(((4,5-cis-dihydroxy-2-cyclopenten-1-yl)amino)methyl)-7-deazaguanosine). The polypeptide is Queuine tRNA-ribosyltransferase (Granulibacter bethesdensis (strain ATCC BAA-1260 / CGDNIH1)).